Consider the following 320-residue polypeptide: GMP reductase (320 aa).

The active-site Thioimidate intermediate is Cys174. Ile203–Cys226 is an NADP(+) binding site.

This sequence belongs to the IMPDH/GMPR family. GuaC type 2 subfamily.

It carries out the reaction IMP + NH4(+) + NADP(+) = GMP + NADPH + 2 H(+). Catalyzes the irreversible NADPH-dependent deamination of GMP to IMP. It functions in the conversion of nucleobase, nucleoside and nucleotide derivatives of G to A nucleotides, and in maintaining the intracellular balance of A and G nucleotides. The chain is GMP reductase from Mesoplasma florum (strain ATCC 33453 / NBRC 100688 / NCTC 11704 / L1) (Acholeplasma florum).